A 501-amino-acid chain; its full sequence is Ribose import ATP-binding protein RbsA (501 aa).

ABC transporter domains follow at residues 5–241 (LQLK…VGRK) and 252–495 (APGD…VGKL). Residue 37–44 (GENGAGKS) coordinates ATP.

It belongs to the ABC transporter superfamily. Ribose importer (TC 3.A.1.2.1) family. As to quaternary structure, the complex is composed of an ATP-binding protein (RbsA), two transmembrane proteins (RbsC) and a solute-binding protein (RbsB).

It localises to the cell inner membrane. It carries out the reaction D-ribose(out) + ATP + H2O = D-ribose(in) + ADP + phosphate + H(+). Part of the ABC transporter complex RbsABC involved in ribose import. Responsible for energy coupling to the transport system. This chain is Ribose import ATP-binding protein RbsA, found in Escherichia coli (strain K12).